A 158-amino-acid polypeptide reads, in one-letter code: Ribosomal RNA large subunit methyltransferase H (158 aa).

S-adenosyl-L-methionine-binding positions include L76, G107, and 126–131; that span reads LSGLTM.

This sequence belongs to the RNA methyltransferase RlmH family. As to quaternary structure, homodimer.

The protein localises to the cytoplasm. The catalysed reaction is pseudouridine(1915) in 23S rRNA + S-adenosyl-L-methionine = N(3)-methylpseudouridine(1915) in 23S rRNA + S-adenosyl-L-homocysteine + H(+). In terms of biological role, specifically methylates the pseudouridine at position 1915 (m3Psi1915) in 23S rRNA. The chain is Ribosomal RNA large subunit methyltransferase H from Teredinibacter turnerae (strain ATCC 39867 / T7901).